The sequence spans 547 residues: MQAFDELLTVEQLSFSYEEDEKPVFQDISFELQKGECVLLLGPSGCGKSSLALCLNGLYPEACDGIQSGHVFLFQKPVTDAETSETITQHAGVVFQDPDQQFCMLTVEDEIAFGLENLQIPKEEMTEKINAVLEKLRITHLKEKMISTLSGGQKQKVALACILAMEPELIILDEPTSLLDPFSAREFVHLMKDLQREKGFSLLVIEHQLDEWAPWIERTIVLDKSGKKALDGLTKNLFQHEAETLKKLGIAIPKVCHLQEKLSMPFTLSKEMLFKEPIPAGHVKKKKAPSGESVLEVSSLSFARGQQAIFKDISFSLREGSLTALVGPNGTGKSTLLSVLASLMKPQSGKILLYDQPLQKYKEKELRKRMGFVFQNPEHQFVTDTVYDELLFGQKANAETEKKAQHLLQRFGLAHLADHHPFAISQGQKRRLSVATMLMHDVKVLLLDEPTFGQDARTAAECMEMIQRIKAEGTAVLMITHDMELVSSYADSVLVLHDTGLAFDGSPAQLFSQETGLVQKAKLTLPLLYEWMAFQEEVRDEATVTSH.

2 consecutive ABC transporter domains span residues 8 to 250 (LTVE…KLGI) and 295 to 523 (LEVS…KAKL). ATP-binding positions include 42–49 (GPSGCGKS) and 327–334 (GPNGTGKS).

The protein belongs to the ABC transporter superfamily. As to quaternary structure, the complex is composed of two ATP-binding proteins (YkoD), two transmembrane proteins (YkoC and YkoE) and a solute-binding protein (YkoF).

The protein resides in the cell membrane. Functionally, part of the ABC transporter complex YkoCDEF that could transport hydroxymethylpyrimidine (HMP) and/or thiamine. Could also transport other HMP-containing products. Responsible for energy coupling to the transport system. The polypeptide is Putative HMP/thiamine import ATP-binding protein YkoD (ykoD) (Bacillus subtilis (strain 168)).